Consider the following 420-residue polypeptide: D-tagatose-1,6-bisphosphate aldolase subunit GatZ (420 aa).

It belongs to the GatZ/KbaZ family. GatZ subfamily. In terms of assembly, forms a complex with GatY.

The protein operates within carbohydrate metabolism; D-tagatose 6-phosphate degradation; D-glyceraldehyde 3-phosphate and glycerone phosphate from D-tagatose 6-phosphate: step 2/2. In terms of biological role, component of the tagatose-1,6-bisphosphate aldolase GatYZ that is required for full activity and stability of the Y subunit. Could have a chaperone-like function for the proper and stable folding of GatY. When expressed alone, GatZ does not show any aldolase activity. Is involved in the catabolism of galactitol. This is D-tagatose-1,6-bisphosphate aldolase subunit GatZ from Escherichia coli (strain SMS-3-5 / SECEC).